A 243-amino-acid chain; its full sequence is R-spondin-2 (243 aa).

A signal peptide spans 1–21; that stretch reads MQFRLFSFALIILNCMDYSHC. 11 disulfides stabilise this stretch: cysteine 40-cysteine 46, cysteine 43-cysteine 52, cysteine 55-cysteine 74, cysteine 78-cysteine 93, cysteine 96-cysteine 104, cysteine 101-cysteine 110, cysteine 113-cysteine 124, cysteine 128-cysteine 141, cysteine 145-cysteine 187, cysteine 156-cysteine 163, and cysteine 196-cysteine 203. Residues 90–134 form an FU repeat; the sequence is MNRCARCRIENCDSCFSKDFCTKCKVGFYLHRGRCFDECPDGFAP. The region spanning 144–204 is the TSP type-1 domain; it reads GCEVGHWSEW…RCKMTMRHCP (61 aa). N-linked (GlcNAc...) asparagine glycosylation is present at asparagine 160. Positions 204-224 are enriched in basic residues; it reads PGGKRTPKAKEKRNKKKKRKL. The segment at 204 to 243 is disordered; that stretch reads PGGKRTPKAKEKRNKKKKRKLIERAQEQHSVFLATDRANQ.

This sequence belongs to the R-spondin family. In terms of assembly, interacts with WNT1. Binds heparin. Interacts with LGR4, LGR5 and LGR6. Interacts with E3 ubiquitin ligases RNF43 and ZNRF3.

The protein localises to the secreted. Activator of the canonical Wnt signaling pathway by acting as a ligand for LGR4-6 receptors. Upon binding to LGR4-6 (LGR4, LGR5 or LGR6), LGR4-6 associate with phosphorylated LRP6 and frizzled receptors that are activated by extracellular Wnt receptors, triggering the canonical Wnt signaling pathway to increase expression of target genes. Also regulates the canonical Wnt/beta-catenin-dependent pathway and non-canonical Wnt signaling by acting as an inhibitor of ZNRF3, an important regulator of the Wnt signaling pathway. During embryonic development, plays a crucial role in limb specification, amplifying the Wnt signaling pathway independently of LGR4-6 receptors, possibly by acting as a direct antagonistic ligand to RNF43 and ZNRF3, hence governing the number of limbs an embryo should form. The sequence is that of R-spondin-2 (RSPO2) from Homo sapiens (Human).